The following is a 317-amino-acid chain: Endochitinase 3 (317 aa).

The signal sequence occupies residues 1–19 (MFVRNALVVTGLLAALTQA). N-linked (GlcNAc...) asparagine glycans are attached at residues asparagine 25, asparagine 49, and asparagine 169. The region spanning 29 to 317 (HKLTVYWGAE…NYQKEIKANL (289 aa)) is the GH18 domain. The Proton donor role is filled by glutamate 170. N-linked (GlcNAc...) asparagine glycosylation occurs at asparagine 245.

It belongs to the glycosyl hydrolase 18 family. Chitinase class III subfamily.

It is found in the secreted. It carries out the reaction Random endo-hydrolysis of N-acetyl-beta-D-glucosaminide (1-&gt;4)-beta-linkages in chitin and chitodextrins.. Secreted chitinase involved in the degradation of chitin, a component of the cell walls of fungi and exoskeletal elements of some animals (including worms and arthropods). Participates in the infection process and directly acts in the penetration process of the host cuticle. Involved in heat-shock adaptation. The sequence is that of Endochitinase 3 (chi3) from Metarhizium robertsii (strain ARSEF 23 / ATCC MYA-3075) (Metarhizium anisopliae (strain ARSEF 23)).